A 208-amino-acid chain; its full sequence is Uracil phosphoribosyltransferase (208 aa).

5-phospho-alpha-D-ribose 1-diphosphate-binding positions include arginine 78, arginine 103, and 130 to 138 (DPMLATGGS). Residues isoleucine 193 and 198–200 (GDA) contribute to the uracil site. Aspartate 199 is a 5-phospho-alpha-D-ribose 1-diphosphate binding site.

It belongs to the UPRTase family. The cofactor is Mg(2+).

It carries out the reaction UMP + diphosphate = 5-phospho-alpha-D-ribose 1-diphosphate + uracil. It participates in pyrimidine metabolism; UMP biosynthesis via salvage pathway; UMP from uracil: step 1/1. With respect to regulation, allosterically activated by GTP. Its function is as follows. Catalyzes the conversion of uracil and 5-phospho-alpha-D-ribose 1-diphosphate (PRPP) to UMP and diphosphate. In Colwellia psychrerythraea (strain 34H / ATCC BAA-681) (Vibrio psychroerythus), this protein is Uracil phosphoribosyltransferase.